Here is a 124-residue protein sequence, read N- to C-terminus: Small ribosomal subunit protein bS6 (124 aa).

The disordered stretch occupies residues 96-124; that stretch reads ETGPSPMMKEVQREEAKKSAATQPSEAQA. Polar residues predominate over residues 115–124; it reads AATQPSEAQA.

This sequence belongs to the bacterial ribosomal protein bS6 family.

Binds together with bS18 to 16S ribosomal RNA. The chain is Small ribosomal subunit protein bS6 from Paraburkholderia phytofirmans (strain DSM 17436 / LMG 22146 / PsJN) (Burkholderia phytofirmans).